The sequence spans 422 residues: MERKDFETWLDNISVTFLSLTDLQKNETLDHLISLSGAVQLRHLSNNLETLLKRDFLKLLPLELSFYLLKWLDPQTLLTCCLVSKQWNKVISACTEVWQTACKNLGWQIDDSVQDSLHWKKVYLKAILRMKQLEDHEAFETSSLIGHSARVYALYYKDGLLCTGSDDLSAKLWDVSTGQCVYGIQTHTCAAVKFDEQKLVTGSFDNTVACWEWSSGARTQHFRGHTGAVFSVDYSDELDILVSGSADFAVKVWALSAGTCLNTLTGHTEWVTKVVLQKCKVKSLLHSPGDYILLSADKYEIKIWPIGREINCKCLKTLSVSEDRSICLQPRLHFDGKYIVCSSALGLYQWDFASYDILRVIKTPEVANLALLGFGDVFALLFDNHYLYIMDLRTESLISRWPLPEYRKSKRGSSFLAGERPG.

An F-box domain is found at Arg-54–Ala-101. WD repeat units follow at residues Gly-146–Gly-183, Gln-185–His-221, Gly-224–Thr-265, and Leu-276–Cys-314. Lys-298 is modified (N6-acetyllysine).

Directly interacts with SKP1 and CUL1. Widely expressed during embryogenesis and in adult tissues.

In terms of biological role, substrate-recognition component of the SCF (SKP1-CUL1-F-box protein)-type E3 ubiquitin ligase complex. The protein is F-box/WD repeat-containing protein 2 (Fbxw2) of Mus musculus (Mouse).